An 83-amino-acid polypeptide reads, in one-letter code: Large ribosomal subunit protein eL14 (83 aa).

It belongs to the eukaryotic ribosomal protein eL14 family.

The protein is Large ribosomal subunit protein eL14 of Thermococcus gammatolerans (strain DSM 15229 / JCM 11827 / EJ3).